The following is a 488-amino-acid chain: MFNLFLAVFPEIFIINATFILLIHGVVFSTSKKDDYPPLVSNVGWLGLLSVLITLLLLAAGAPLLTIAHLFWNNFFRRDNFTYFCQILLLLSTAGTISMCFDFFEQERFDAFEFIVLILLSTCSMLFMISAYDLIAMYLAIELQSLCFYVLAASKRKSEFSTEAGLKYLILGAFSSGILLFGCSMIYGSTGATHFDQLAKILTGYEITGARSSGIFMGILFIAVGFLFKITAVPFHMWAPDIYEGSPTPVTAFLSIAPKISIFANILRVFIYGSYGATLQQIFFFCSIASMILGALAAMAQTKVKRLLAYSSIGHVGYICIGFSCGTIEGIQSLLIGLFIYALTTINAFAIVLALRQTRVKYIADLGALAKTNPILAITFSITMFSYAGIPPLAGFCSKFYLFFAALGCGAYFLASVGVVTSVIGCFYYIRLVKRMFFDTPRTWILYEPMDRNKSLLLAMTSSFITLFFLYPSPLFSVTHQMALSLYL.

14 consecutive transmembrane segments (helical) span residues 4-24 (LFLA…LLIH), 45-65 (WLGL…APLL), 84-104 (FCQI…FDFF), 111-131 (AFEF…MISA), 134-154 (LIAM…LAAS), 168-188 (YLIL…MIYG), 215-235 (IFMG…AVPF), 252-272 (AFLS…VFIY), 282-302 (IFFF…MAQT), 308-328 (LAYS…CGTI), 334-354 (LLIG…IVLA), 375-395 (ILAI…PLAG), 400-420 (FYLF…VGVV), and 456-476 (LLLA…SPLF).

The protein belongs to the complex I subunit 2 family.

It localises to the mitochondrion inner membrane. The enzyme catalyses a ubiquinone + NADH + 5 H(+)(in) = a ubiquinol + NAD(+) + 4 H(+)(out). In terms of biological role, core subunit of the mitochondrial membrane respiratory chain NADH dehydrogenase (Complex I) that is believed to belong to the minimal assembly required for catalysis. Complex I functions in the transfer of electrons from NADH to the respiratory chain. The immediate electron acceptor for the enzyme is believed to be ubiquinone. In Oenothera berteroana (Bertero's evening primrose), this protein is NADH-ubiquinone oxidoreductase chain 2 (ND2).